We begin with the raw amino-acid sequence, 689 residues long: Glycine--tRNA ligase beta subunit (689 aa).

This sequence belongs to the class-II aminoacyl-tRNA synthetase family. As to quaternary structure, tetramer of two alpha and two beta subunits.

Its subcellular location is the cytoplasm. The catalysed reaction is tRNA(Gly) + glycine + ATP = glycyl-tRNA(Gly) + AMP + diphosphate. This Edwardsiella ictaluri (strain 93-146) protein is Glycine--tRNA ligase beta subunit.